We begin with the raw amino-acid sequence, 401 residues long: Deoxyhypusine synthase-like protein (401 aa).

Belongs to the deoxyhypusine synthase family.

In Thermosynechococcus vestitus (strain NIES-2133 / IAM M-273 / BP-1), this protein is Deoxyhypusine synthase-like protein.